A 156-amino-acid chain; its full sequence is Small ribosomal subunit protein uS7 (156 aa).

The protein belongs to the universal ribosomal protein uS7 family. Part of the 30S ribosomal subunit. Contacts proteins S9 and S11.

Functionally, one of the primary rRNA binding proteins, it binds directly to 16S rRNA where it nucleates assembly of the head domain of the 30S subunit. Is located at the subunit interface close to the decoding center, probably blocks exit of the E-site tRNA. The chain is Small ribosomal subunit protein uS7 from Staphylococcus aureus (strain bovine RF122 / ET3-1).